Reading from the N-terminus, the 459-residue chain is Elongation factor 1-alpha (459 aa).

G2 bears the N,N,N-trimethylglycine mark. K3 carries the post-translational modification N6,N6-dimethyllysine; alternate. K3 carries the N6-methyllysine; alternate modification. Residues 5–240 (KLHVNVVVIG…DAIEPPTRPT (236 aa)) form the tr-type G domain. The G1 stretch occupies residues 14–21 (GHVDSGKS). 14-21 (GHVDSGKS) provides a ligand contact to GTP. K30 carries the N6-methyllysine modification. A G2 region spans residues 70-74 (GITID). Residue K79 is modified to N6,N6,N6-trimethyllysine. The interval 91–94 (DAPG) is G3. GTP contacts are provided by residues 91 to 95 (DAPGH) and 153 to 156 (NKMD). Positions 153–156 (NKMD) are G4. The G5 stretch occupies residues 192-194 (SGW). Residue K316 is modified to N6,N6-dimethyllysine; alternate. K316 carries the post-translational modification N6-methyllysine; alternate. K390 is modified (N6-methyllysine).

Belongs to the TRAFAC class translation factor GTPase superfamily. Classic translation factor GTPase family. EF-Tu/EF-1A subfamily.

The protein localises to the cytoplasm. Functionally, this protein promotes the GTP-dependent binding of aminoacyl-tRNA to the A-site of ribosomes during protein biosynthesis. This Cryptococcus neoformans var. neoformans serotype D (strain B-3501A) (Filobasidiella neoformans) protein is Elongation factor 1-alpha (TEF1).